The primary structure comprises 1400 residues: DNA-directed RNA polymerase subunit beta' (1400 aa).

C71, C73, C86, and C89 together coordinate Zn(2+). D462, D464, and D466 together coordinate Mg(2+). Zn(2+)-binding residues include C810, C884, C891, and C894. The segment at 1377–1400 is disordered; it reads REKQATIVPPAAPEAEPLALPPVE.

This sequence belongs to the RNA polymerase beta' chain family. In terms of assembly, the RNAP catalytic core consists of 2 alpha, 1 beta, 1 beta' and 1 omega subunit. When a sigma factor is associated with the core the holoenzyme is formed, which can initiate transcription. It depends on Mg(2+) as a cofactor. The cofactor is Zn(2+).

The catalysed reaction is RNA(n) + a ribonucleoside 5'-triphosphate = RNA(n+1) + diphosphate. Functionally, DNA-dependent RNA polymerase catalyzes the transcription of DNA into RNA using the four ribonucleoside triphosphates as substrates. This Rhodopseudomonas palustris (strain HaA2) protein is DNA-directed RNA polymerase subunit beta'.